We begin with the raw amino-acid sequence, 110 residues long: MDPGSTASPLQCTAGFPSKNRVAILAELDKEKRKLLLQNQSSTNNPGASIALARPNMNKDFRDHSEQQHIAAQQKAALQHAHAHSSGYFITQDSAFGNLILPVIPRLEAE.

The protein belongs to the SOSS-C family. In terms of assembly, belongs to the multiprotein complex Integrator. Component of the SOSS complex, composed of soss-b (soss-b1/nabp2 or soss-b2/nabp1), soss-a/ints3 and soss-c/inip.

Its subcellular location is the nucleus. Its function is as follows. Component of the SOSS complex, a multiprotein complex that functions downstream of the MRN complex to promote DNA repair and G2/M checkpoint. The SOSS complex associates with single-stranded DNA at DNA lesions and influences diverse endpoints in the cellular DNA damage response including cell-cycle checkpoint activation, recombinational repair and maintenance of genomic stability. Required for efficient homologous recombination-dependent repair of double-strand breaks (DSBs). This Xenopus laevis (African clawed frog) protein is SOSS complex subunit C (inip).